The chain runs to 81 residues: Cytochrome b559 subunit alpha (81 aa).

Residues Val-21–Trp-35 form a helical membrane-spanning segment. His-23 is a heme binding site.

This sequence belongs to the PsbE/PsbF family. Heterodimer of an alpha subunit and a beta subunit. PSII is composed of 1 copy each of membrane proteins PsbA, PsbB, PsbC, PsbD, PsbE, PsbF, PsbH, PsbI, PsbJ, PsbK, PsbL, PsbM, PsbT, PsbX, PsbY, PsbZ, Psb30/Ycf12, peripheral proteins PsbO, CyanoQ (PsbQ), PsbU, PsbV and a large number of cofactors. It forms dimeric complexes. The cofactor is heme b.

Its subcellular location is the cellular thylakoid membrane. This b-type cytochrome is tightly associated with the reaction center of photosystem II (PSII). PSII is a light-driven water:plastoquinone oxidoreductase that uses light energy to abstract electrons from H(2)O, generating O(2) and a proton gradient subsequently used for ATP formation. It consists of a core antenna complex that captures photons, and an electron transfer chain that converts photonic excitation into a charge separation. This is Cytochrome b559 subunit alpha from Picosynechococcus sp. (strain ATCC 27264 / PCC 7002 / PR-6) (Agmenellum quadruplicatum).